Consider the following 314-residue polypeptide: Cyclic di-GMP binding protein TDE_0214 (314 aa).

One can recognise a PilZ domain in the interval 146-234; the sequence is QKRRNERVVI…KTVRTEPVEG (89 aa). A compositionally biased stretch (polar residues) spans 288–300; sequence TPVSSPIGTNTAP. Residues 288–314 form a disordered region; it reads TPVSSPIGTNTAPLTPPPADSAPEQIS.

In terms of biological role, cyclic-di-GMP binding protein that plays important roles in motility, chemotaxis, biofilm formation and virulence. In Treponema denticola (strain ATCC 35405 / DSM 14222 / CIP 103919 / JCM 8153 / KCTC 15104), this protein is Cyclic di-GMP binding protein TDE_0214.